A 265-amino-acid polypeptide reads, in one-letter code: 4-hydroxy-tetrahydrodipicolinate reductase (265 aa).

Residues 7-12 (GASGRM) and Asp-33 each bind NAD(+). Arg-34 contacts NADP(+). NAD(+) is bound by residues 96–98 (GTT) and 120–123 (ASNF). His-153 acts as the Proton donor/acceptor in catalysis. His-154 lines the (S)-2,3,4,5-tetrahydrodipicolinate pocket. The active-site Proton donor is Lys-157. (S)-2,3,4,5-tetrahydrodipicolinate is bound at residue 163–164 (GT).

This sequence belongs to the DapB family.

Its subcellular location is the cytoplasm. The catalysed reaction is (S)-2,3,4,5-tetrahydrodipicolinate + NAD(+) + H2O = (2S,4S)-4-hydroxy-2,3,4,5-tetrahydrodipicolinate + NADH + H(+). The enzyme catalyses (S)-2,3,4,5-tetrahydrodipicolinate + NADP(+) + H2O = (2S,4S)-4-hydroxy-2,3,4,5-tetrahydrodipicolinate + NADPH + H(+). It participates in amino-acid biosynthesis; L-lysine biosynthesis via DAP pathway; (S)-tetrahydrodipicolinate from L-aspartate: step 4/4. Its function is as follows. Catalyzes the conversion of 4-hydroxy-tetrahydrodipicolinate (HTPA) to tetrahydrodipicolinate. This is 4-hydroxy-tetrahydrodipicolinate reductase from Paraburkholderia phymatum (strain DSM 17167 / CIP 108236 / LMG 21445 / STM815) (Burkholderia phymatum).